We begin with the raw amino-acid sequence, 274 residues long: NH(3)-dependent NAD(+) synthetase (274 aa).

An ATP-binding site is contributed by 46–53 (GISGGQDS). D52 lines the Mg(2+) pocket. Position 140 (R140) interacts with deamido-NAD(+). T160 provides a ligand contact to ATP. E165 contributes to the Mg(2+) binding site. Positions 173 and 180 each coordinate deamido-NAD(+). K189 and T211 together coordinate ATP. 260 to 261 (HK) is a binding site for deamido-NAD(+).

The protein belongs to the NAD synthetase family. As to quaternary structure, homodimer.

The enzyme catalyses deamido-NAD(+) + NH4(+) + ATP = AMP + diphosphate + NAD(+) + H(+). Its pathway is cofactor biosynthesis; NAD(+) biosynthesis; NAD(+) from deamido-NAD(+) (ammonia route): step 1/1. In terms of biological role, catalyzes the ATP-dependent amidation of deamido-NAD to form NAD. Uses ammonia as a nitrogen source. This chain is NH(3)-dependent NAD(+) synthetase, found in Streptococcus pyogenes serotype M3 (strain ATCC BAA-595 / MGAS315).